The sequence spans 296 residues: AUGMIN subunit 2 (296 aa).

Coiled-coil stretches lie at residues 56-83 (DDLI…QGRK) and 253-285 (AVHK…NRRL). The tract at residues 218–296 (AVSLPTTPGG…WPPSVKKSSV (79 aa)) is disordered. Positions 264-277 (QNEEEEEEEEEEDG) are enriched in acidic residues.

Belongs to the HAUS2 family. In terms of assembly, part of the augmin complex composed of 8 subunits. The complex acts on microtubules and interacts with gamma-tubulin in spindles and the phragmoplast.

Contributes to the assembly of the acentrosomal spindle and phragmoplast microtubule arrays as part of the augmin complex. This chain is AUGMIN subunit 2, found in Arabidopsis thaliana (Mouse-ear cress).